The sequence spans 183 residues: I-kappa-B like protein N2 (183 aa).

2 ANK repeats span residues 62-95 and 99-129; these read DGNT…DLNL and CHKP…NLEA. Residues 163–183 are disordered; sequence PRQDGSSEDEVSDSEEKSDSE.

It belongs to the polydnaviridae I-Kappa-B like protein family.

Its function is as follows. Suppresses the host immune response through NF-kappa-B inactivation. Possesses ankyrin repeat domains required for NF-kappa-B binding but lacks the regulatory regions required for dissociation from NF-kappa-B and degradation. Therefore, prevents host NF-kappa-B release and subsequent activation. This Microplitis demolitor (Parasitoid wasp) protein is I-kappa-B like protein N2 (N5).